Here is a 554-residue protein sequence, read N- to C-terminus: MAAADLSHGHYLSGDPVCLHEEKTPAGRIVADCLTDCYQDSVTFDDVAVDFTQEEWTLLDSTQRSLYSDVMLENYKNLATVGGQIIKPSLISWLEQEESRTVQGGVLQGWEMRLETQWSILQQDFLRGQTSIGIQLEGKHNGRELCDCEQCGEVFSEHSCLKTHVRTQSTGNTHDCNQYGKDFLTLCEKTSTGEKLSEFNQSEKIFSLTPNIVYQRTSTQEKSFECSHCGKSFINESYLQAHMRTHNGEKLYEWRNYGPGFIDSTSLSVLIETLNAKKPYKCKECGKGYRYPAYLSIHMRTHTGEKPYECKECGKAFNYSNSFQIHGRTHTGEKPYVCKECGKAFTQYSGLSMHVRSHSGDKPYECKECGKSFLTSSRLIQHIRTHTGEKPFVCVECGKAFAVSSNLSGHLRTHTEEKACECKICGKVFGYPSCLNNHMRTHSAQKPYTCKECGKAFNYSTHLKIHMRIHTGEKPYECKQCGKAFSHSSSFQIHERTHTGEKPYECKECGKAFTCSSSFRIHEKTHTEEKPYKCQQCGKAYSHPRSLRRHEQIH.

Residues 42–112 enclose the KRAB domain; the sequence is VTFDDVAVDF…QGGVLQGWEM (71 aa). The C2H2-type 1; atypical zinc finger occupies 146–174; sequence CDCEQCGEVFSEHSCLKTHVRTQSTGNTH. 11 C2H2-type zinc fingers span residues 224–246, 280–302, 308–330, 336–358, 364–386, 392–414, 420–442, 448–470, 476–498, 504–526, and 532–554; these read FECS…MRTH, YKCK…MRTH, YECK…GRTH, YVCK…VRSH, YECK…IRTH, FVCV…LRTH, CECK…MRTH, YTCK…MRIH, YECK…ERTH, YECK…EKTH, and YKCQ…EQIH.

Its subcellular location is the nucleus. Its function is as follows. May be involved in transcriptional regulation. The polypeptide is Zinc finger protein 426 (ZNF426) (Homo sapiens (Human)).